A 78-amino-acid polypeptide reads, in one-letter code: Acyl carrier protein (78 aa).

Residues 2–77 (SDTVERVKKI…DAVKFIDKAS (76 aa)) enclose the Carrier domain. Residue Ser-37 is modified to O-(pantetheine 4'-phosphoryl)serine.

The protein belongs to the acyl carrier protein (ACP) family. 4'-phosphopantetheine is transferred from CoA to a specific serine of apo-ACP by AcpS. This modification is essential for activity because fatty acids are bound in thioester linkage to the sulfhydryl of the prosthetic group.

It is found in the cytoplasm. It functions in the pathway lipid metabolism; fatty acid biosynthesis. Carrier of the growing fatty acid chain in fatty acid biosynthesis. This is Acyl carrier protein from Bartonella quintana (strain Toulouse) (Rochalimaea quintana).